We begin with the raw amino-acid sequence, 140 residues long: Ribosome-binding factor A (140 aa).

The tract at residues 115–140 (EDERQQRGDIPPGSDQQPGSDEQPTG) is disordered. The segment covering 128–140 (SDQQPGSDEQPTG) has biased composition (polar residues).

This sequence belongs to the RbfA family. Monomer. Binds 30S ribosomal subunits, but not 50S ribosomal subunits or 70S ribosomes.

It is found in the cytoplasm. In terms of biological role, one of several proteins that assist in the late maturation steps of the functional core of the 30S ribosomal subunit. Associates with free 30S ribosomal subunits (but not with 30S subunits that are part of 70S ribosomes or polysomes). Required for efficient processing of 16S rRNA. May interact with the 5'-terminal helix region of 16S rRNA. The polypeptide is Ribosome-binding factor A (Synechococcus sp. (strain CC9605)).